A 206-amino-acid chain; its full sequence is MRFTVAIDGPAAAGKGTISRAVAAHFRFAHLDTGLLYRAVGAKVTEGADPVAAAEGLDLADLARGDLRSAEAGQAASRVAALPEVRAALVAFQRSFARREGGAVLDGRDIGTVICPEAEVKLFVTASDEERARRRWLELAAKGGAQSEAEILADLRERDRRDREREAAPLRPAPDALLLDTTELTIDAAVNKAIEAIELRQAQGRE.

Glycine 9–threonine 17 contacts ATP.

The protein belongs to the cytidylate kinase family. Type 1 subfamily.

The protein localises to the cytoplasm. It carries out the reaction CMP + ATP = CDP + ADP. The catalysed reaction is dCMP + ATP = dCDP + ADP. This is Cytidylate kinase from Cereibacter sphaeroides (strain ATCC 17023 / DSM 158 / JCM 6121 / CCUG 31486 / LMG 2827 / NBRC 12203 / NCIMB 8253 / ATH 2.4.1.) (Rhodobacter sphaeroides).